Here is a 329-residue protein sequence, read N- to C-terminus: Ribosomal RNA small subunit methyltransferase H (329 aa).

S-adenosyl-L-methionine-binding positions include 47–49, aspartate 67, phenylalanine 93, aspartate 115, and glutamine 122; that span reads GGH.

Belongs to the methyltransferase superfamily. RsmH family.

Its subcellular location is the cytoplasm. The enzyme catalyses cytidine(1402) in 16S rRNA + S-adenosyl-L-methionine = N(4)-methylcytidine(1402) in 16S rRNA + S-adenosyl-L-homocysteine + H(+). In terms of biological role, specifically methylates the N4 position of cytidine in position 1402 (C1402) of 16S rRNA. This is Ribosomal RNA small subunit methyltransferase H from Blochmanniella pennsylvanica (strain BPEN).